Consider the following 322-residue polypeptide: Ferric-anguibactin-binding protein FatB (322 aa).

Residues Met1–Gly22 form the signal peptide. A lipid anchor (N-palmitoyl cysteine) is attached at Cys23. Residue Cys23 is the site of S-diacylglycerol cysteine attachment. Residues Arg57–Ser322 form the Fe/B12 periplasmic-binding domain.

Belongs to the bacterial solute-binding protein 8 family. As to quaternary structure, part of an iron transport system composed of the outer membrane receptor FatA, the periplasmic binding protein FatB and the inner membrane proteins FatC and FatD.

The protein localises to the cell inner membrane. Functionally, involved in the uptake of iron in complex with the siderophore anguibactin. Binds ferric-anguibactin in the periplasm and mediates its transport into the cytoplasm. This chain is Ferric-anguibactin-binding protein FatB, found in Vibrio anguillarum (strain ATCC 68554 / 775) (Listonella anguillarum).